We begin with the raw amino-acid sequence, 307 residues long: Putative serpin A13 (307 aa).

The first 21 residues, 1-21, serve as a signal peptide directing secretion; it reads MEASRWWLLVTVLMAGAHCVA. Asn-150 and Asn-250 each carry an N-linked (GlcNAc...) asparagine glycan.

The protein belongs to the serpin family.

Its subcellular location is the secreted. The sequence is that of Putative serpin A13 (SERPINA13P) from Homo sapiens (Human).